The chain runs to 204 residues: Refilin-A (204 aa).

The tract at residues 1–52 (MVGHLHLQAMGDTREQSRDGLLDSPDSGLPPSPSPSPPFYALSPGTLDTRTT) is disordered. Residues 12–21 (DTREQSRDGL) are compositionally biased toward basic and acidic residues. Residues 28–38 (GLPPSPSPSPP) are compositionally biased toward pro residues. The residue at position 151 (Arg151) is an Asymmetric dimethylarginine.

This sequence belongs to the Refilin family. As to quaternary structure, interacts with FLNA and FLNB. Detected in various tissues, with highest expression in lung, followed by spleen.

Its subcellular location is the cytoplasm. The protein resides in the cytoskeleton. In terms of biological role, involved in the regulation of the perinuclear actin network and nuclear shape through interaction with filamins. Plays an essential role in the formation of cartilaginous skeletal elements. The protein is Refilin-A (Rflna) of Mus musculus (Mouse).